Consider the following 1027-residue polypeptide: Circadian locomoter output cycles protein kaput (1027 aa).

One can recognise a bHLH domain in the interval 15 to 65 (LCRKSRNLSEKKRRDQFNSLVNDLSALISTSSRKMDKSTVLKSTIAFLKNH). PAS domains are found at residues 88–160 (NDEY…VIEP) and 255–321 (REMS…ELRQ). Disordered regions lie at residues 377–402 (RKEG…ASTG), 443–575 (TSPA…QQLQ), 765–800 (QQMM…TQQQ), 869–911 (TINP…NNED), and 926–1027 (SINF…GSSQ). Low complexity predominate over residues 383–402 (SGNSNSITNNGSSKVIASTG). Residues 443–486 (TSPAVDSSPMWSASAVQPSGSCQINPLKTSRPASSYGNISSTGI) are compositionally biased toward polar residues. Composition is skewed to low complexity over residues 504 to 516 (SDST…SVTS) and 552 to 575 (QQQQ…QQLQ). An implicated in the circadian rhythmicity region spans residues 780–1027 (QHNLQQQHQS…SPHTAPGSSQ (248 aa)). Composition is skewed to low complexity over residues 871-909 (NPFN…QNNN) and 951-995 (SGSN…NQNQ). Over residues 1006–1027 (QMSQEQSQNLFNSPHTAPGSSQ) the composition is skewed to polar residues.

In terms of assembly, efficient DNA binding requires dimerization with another bHLH protein. Forms a heterodimer with Cycle. In terms of tissue distribution, widely expressed. Found in head, body, and appendage fractions.

The protein localises to the nucleus. Functionally, circadian regulator that acts as a transcription factor and generates a rhythmic output with a period of about 24 hours. Oscillates in antiphase to the cycling observed for period (PER) and timeless (TIM). According to PubMed:9742131, reaches peak abundance within several hours of the dark-light transition at ZT0 (zeitgeber 0), whereas PubMed:9616122 describes bimodal oscillating expression with maximum at ZT5 and ZT23. Clock-cycle heterodimers activate cycling transcription of PER and TIM by binding to the E-box (5'-CACGTG-3') present in their promoters. Once induced, Period and Timeless block Clock's ability to transactivate their promoters. The sequence is that of Circadian locomoter output cycles protein kaput (Clk) from Drosophila melanogaster (Fruit fly).